Consider the following 1141-residue polypeptide: Eukaryotic translation initiation factor 3 subunit A (1141 aa).

In terms of domain architecture, PCI spans 319–501; the sequence is LQRMAAHVLL…NSIYFGTDLT (183 aa). Basic and acidic residues-rich tracts occupy residues 588–623 and 829–899; these read QNNAREEEEARRQEEESRKAKLAEQKRLEQEQEERE and AAEE…RGGD. Disordered regions lie at residues 588-631 and 829-1141; these read QNNA…QNEI and AAEE…VKRR. S908 carries the post-translational modification Phosphoserine. 4 stretches are compositionally biased toward basic and acidic residues: residues 920–976, 990–1051, 1059–1087, and 1110–1131; these read ERND…EPDT, SRDD…EPQR, DAPRHADRENRRPAGERRDRDVRETRGDQ, and TREEKPAAKRDQAQEKENKAGD.

This sequence belongs to the eIF-3 subunit A family. As to quaternary structure, component of the eukaryotic translation initiation factor 3 (eIF-3) complex. The eIF-3 complex interacts with pix.

It localises to the cytoplasm. In terms of biological role, RNA-binding component of the eukaryotic translation initiation factor 3 (eIF-3) complex, which is involved in protein synthesis of a specialized repertoire of mRNAs and, together with other initiation factors, stimulates binding of mRNA and methionyl-tRNAi to the 40S ribosome. The eIF-3 complex specifically targets and initiates translation of a subset of mRNAs involved in cell proliferation. This Drosophila sechellia (Fruit fly) protein is Eukaryotic translation initiation factor 3 subunit A.